A 791-amino-acid chain; its full sequence is ABC multidrug transporter mdr2 (791 aa).

The N-linked (GlcNAc...) asparagine glycan is linked to Asn147. 2 helical membrane passes run 182 to 202 and 220 to 240; these read ALAFLFLLVSSGITMSIPFSI and LFGLSLPMFYGALAGILTLGA. The 290-residue stretch at 182–471 folds into the ABC transmembrane type-1 domain; the sequence is ALAFLFLLVS…LSSFYSELMK (290 aa). N-linked (GlcNAc...) asparagine glycosylation is present at Asn303. 2 helical membrane passes run 307–324 and 326–346; these read GLRAAVSGAAGFGLMAYV and LKLSSILALLLPPIGLGAFFY. Residues Asn352 and Asn421 are each glycosylated (N-linked (GlcNAc...) asparagine). The next 2 membrane-spanning stretches (helical) occupy residues 422-442 and 445-465; these read MTILALLYVGGGMVQSGAITI and LTSFLMYTAYAGSSMFGLSSF. The ABC transporter domain maps to 504–741; that stretch reads IRFENVTFSY…PDGAFTKLME (238 aa). Asn508 is a glycosylation site (N-linked (GlcNAc...) asparagine). Residue 539–546 coordinates ATP; it reads GPSGGGKS. The N-linked (GlcNAc...) asparagine glycan is linked to Asn692. Polar residues predominate over residues 754–769; sequence ANTPANPVAQETSWDL. Residues 754–791 are disordered; the sequence is ANTPANPVAQETSWDLQSDDGTEISEDTNIPSEPRTID. Residues 770–779 are compositionally biased toward acidic residues; sequence QSDDGTEISE.

Belongs to the ABC transporter superfamily. ABCB family. Mitochondrial peptide exporter (TC 3.A.1.212) subfamily.

Its subcellular location is the cell membrane. Its function is as follows. Pleiotropic ABC efflux transporter that may be involved in A.fumigatus adaptation to azoles. This is ABC multidrug transporter mdr2 from Aspergillus fumigatus (strain ATCC MYA-4609 / CBS 101355 / FGSC A1100 / Af293) (Neosartorya fumigata).